The primary structure comprises 317 residues: Carbonic anhydrase 6 (317 aa).

The first 17 residues, 1–17, serve as a signal peptide directing secretion; sequence MRALVSVVSLFFLGIQA. The Alpha-carbonic anhydrase domain maps to 19-277; sequence SDWSYSGDDG…NNHRVVEANF (259 aa). A disulfide bond links Cys41 and Cys223. The active-site Proton donor/acceptor is the His84. 3 residues coordinate Zn(2+): His110, His112, and His137. 219–220 serves as a coordination point for substrate; sequence TT. An N-linked (GlcNAc...) asparagine glycan is attached at Asn255.

This sequence belongs to the alpha-carbonic anhydrase family. Requires Zn(2+) as cofactor. In terms of tissue distribution, major constituent of saliva.

It localises to the secreted. It catalyses the reaction hydrogencarbonate + H(+) = CO2 + H2O. Functionally, reversible hydration of carbon dioxide. Its role in saliva is unknown. This Mus musculus (Mouse) protein is Carbonic anhydrase 6 (Ca6).